We begin with the raw amino-acid sequence, 259 residues long: HTH-type transcriptional regulator TtgV (259 aa).

An HTH iclR-type domain is found at 14-76 (IQVIARAASI…GPAGGFRLGP (63 aa)). A DNA-binding region (H-T-H motif) is located at residues 36–59 (LAAIAQLVGLPRSTVQRIINALEE). One can recognise an IclR-ED domain in the interval 89–253 (ILSLVKPYLR…KLNIERAIGR (165 aa)).

Represses the expression of the ttgGHI and ttgVW operons. Binds to the ttgGHI / ttgVW intergenic region, probably preventing binding of RNA polymerase; ttgV dissociates from this region in the presence of 1-hexanol. The sequence is that of HTH-type transcriptional regulator TtgV (ttgV) from Pseudomonas putida (strain DOT-T1E).